The primary structure comprises 205 residues: Microtubule-associated protein Jupiter (205 aa).

Ser30 is modified (phosphoserine). Phosphothreonine occurs at positions 41, 98, and 102. Over residues 124 to 135 (LISNSKGNYNGK) the composition is skewed to polar residues. The tract at residues 124–205 (LISNSKGNYN…PPGGYSSGLW (82 aa)) is disordered. A compositionally biased stretch (low complexity) spans 136–149 (SGSVSSASSSVSSS). Phosphoserine occurs at positions 138 and 149. Polar residues predominate over residues 181-191 (PANNGSSQVIN).

Belongs to the MAP Jupiter family.

The protein resides in the nucleus. It localises to the cytoplasm. Its subcellular location is the cytoskeleton. The protein localises to the spindle. Functionally, binds to all microtubule populations. This Drosophila virilis (Fruit fly) protein is Microtubule-associated protein Jupiter.